Reading from the N-terminus, the 439-residue chain is Arginine biosynthesis bifunctional protein ArgJ, mitochondrial (439 aa).

Residues Thr-175, Lys-201, Thr-212, Glu-301, Asn-434, and Ser-439 each contribute to the substrate site. Thr-212 (nucleophile) is an active-site residue.

This sequence belongs to the ArgJ family. In terms of assembly, heterodimer of an alpha and a beta chain. In terms of processing, the alpha and beta chains are autoproteolytically processed from a single precursor protein within the mitochondrion.

The protein localises to the mitochondrion matrix. The catalysed reaction is N(2)-acetyl-L-ornithine + L-glutamate = N-acetyl-L-glutamate + L-ornithine. The enzyme catalyses L-glutamate + acetyl-CoA = N-acetyl-L-glutamate + CoA + H(+). The protein operates within amino-acid biosynthesis; L-arginine biosynthesis; L-ornithine and N-acetyl-L-glutamate from L-glutamate and N(2)-acetyl-L-ornithine (cyclic): step 1/1. It functions in the pathway amino-acid biosynthesis; L-arginine biosynthesis; N(2)-acetyl-L-ornithine from L-glutamate: step 1/4. Catalyzes two activities which are involved in the cyclic version of arginine biosynthesis: the synthesis of acetylglutamate from glutamate and acetyl-CoA, and of ornithine by transacetylation between acetylornithine and glutamate. The protein is Arginine biosynthesis bifunctional protein ArgJ, mitochondrial of Candida albicans (strain WO-1) (Yeast).